The following is a 322-amino-acid chain: Pyrroline-5-carboxylate reductase (322 aa).

2 consecutive transmembrane segments (helical) span residues 9 to 29 (YPNVAILGCGKLGQALLVGLL) and 117 to 137 (ILISLMGGVSPGLIVEALHFW). The tract at residues 302-322 (LSQSAGSHGEDNTTDSKTSRA) is disordered. The N-linked (GlcNAc...) asparagine glycan is linked to asparagine 313.

This sequence belongs to the pyrroline-5-carboxylate reductase family.

It localises to the membrane. It carries out the reaction L-proline + NADP(+) = (S)-1-pyrroline-5-carboxylate + NADPH + 2 H(+). The enzyme catalyses L-proline + NAD(+) = (S)-1-pyrroline-5-carboxylate + NADH + 2 H(+). Its pathway is alkaloid biosynthesis. Its function is as follows. Pyrroline-5-carboxylate reductase; part of the gene cluster that mediates the biosynthesis of paraherquamide, a fungal indole alkaloid that belongs to a family of natural products containing a characteristic bicyclo[2.2.2]diazaoctane core. The first steps in the biosynthesis of paraherquamide is the production of the beta-methyl-proline precursor from L-isoleucine. They require oxidation of a terminally hydroxylated L-isoleucine to the corresponding aldehyde by enzymes which have still to be identified. Spontaneous cyclization and dehydration would yield the 4-methyl pyrolline-5-carboxylic acid, which is then reduced by the pyrroline-5-carboxylate reductase phqD leading to the beta-methyl-proline precursor. The next step of paraherquamide biosynthesis involves coupling of beta-methyl-proline and L-tryptophan by the bimodular NRPS phqB, to produce a monooxopiperazine intermediate. The reductase (R) domain of phqB utilizes NADPH for hydride transfer to reduce the thioester bond of the T domain-tethered linear dipeptide to a hemithioaminal intermediate, which spontaneously cleaves the C-S bond to release the aldehyde product. This compound undergoes spontaneous cyclization and dehydration to give a dienamine which is reverse prenylated at C-2 by the reverse prenyltransferase phqJ. The other prenyltransferase present in the cluster, phqI may be a redundant gene in the pathway. During biosynthetic assembly, the key step to produce the polycyclic core is catalyzed by the bifunctional reductase and intramolecular [4+2] Diels-Alderase, phqE, resulting in formation of the [2.2.2] diazaoctane intermediate preparaherquamide. Following formation of preparaherquamide, an indole 2,3-epoxidation-initiated pinacol-like rearrangement is catalyzed by the phqK FAD-dependent monooxygenase. The prenyltransferase phqA, the cytochrome P450 monooxygenase phqL, and the FAD-linked oxidoreductase phqH (or the cytochrome P450 monooxygenase phqM), are proposed to be involved in the formation of the pyran ring. The FAD-dependent monooxygenase phqK is likely responsible for generation of the spiro-oxindole, and the N-methylation is likely mediated by the phqN methyltransferase leading to the isolable natural product paraherquamide F. However, the order of these biosynthetic steps has still to be determined. In late-stage paraherquamide biosynthesis, the third P450 monooxygenase, phqO, is probably responsible for the C-14 hydroxylation, transforming paraherquamide F to paraherquamide G, and paraherquamide E to the final product paraherquamide A. The expansion from the 6-membered ring pyran (in paraherquamides F and G) to the 7-membered dioxepin ring (in paraherquamides A and E) represents a poorly understood but intriguing process that probably involves the 2-oxoglutarate-dependent dioxygenase phqC. Finally, the remaining members of the paraherquamide cluster, including phqI as well as phqM (or phqH), do not have a clearly prescribed role and appear to be redundant. The polypeptide is Pyrroline-5-carboxylate reductase (Penicillium fellutanum).